The following is a 327-amino-acid chain: Phenylalanine--tRNA ligase alpha subunit (327 aa).

A Mg(2+)-binding site is contributed by E252.

Belongs to the class-II aminoacyl-tRNA synthetase family. Phe-tRNA synthetase alpha subunit type 1 subfamily. Tetramer of two alpha and two beta subunits. Requires Mg(2+) as cofactor.

The protein resides in the cytoplasm. The catalysed reaction is tRNA(Phe) + L-phenylalanine + ATP = L-phenylalanyl-tRNA(Phe) + AMP + diphosphate + H(+). The sequence is that of Phenylalanine--tRNA ligase alpha subunit from Photorhabdus laumondii subsp. laumondii (strain DSM 15139 / CIP 105565 / TT01) (Photorhabdus luminescens subsp. laumondii).